The following is a 97-amino-acid chain: MRIPPPLSNNKNRNRRYKRSQFEVIFEILHIIKEGEQIKTRIMYAANLDWRNFSKYIDFLISNGFIKKNKEKFELTELGKKLYSSLYELFEIMNSKP.

This is an uncharacterized protein from Methanocaldococcus jannaschii (strain ATCC 43067 / DSM 2661 / JAL-1 / JCM 10045 / NBRC 100440) (Methanococcus jannaschii).